A 306-amino-acid polypeptide reads, in one-letter code: Manganese-binding lipoprotein MntA (306 aa).

The N-terminal stretch at 1–18 (MRQGLMAAVLFATFALTG) is a signal peptide. The N-palmitoyl cysteine moiety is linked to residue C19. C19 carries the S-diacylglycerol cysteine lipid modification. Residues H66, H132, H198, and D278 each coordinate Mn(2+).

It belongs to the bacterial solute-binding protein 9 family. In terms of assembly, the complex is probably composed of two ATP-binding proteins (MntB), two transmembrane proteins (MntC and MntD) and a solute-binding protein (MntA). Interacts with FloT.

The protein resides in the cell membrane. It is found in the membrane raft. Functionally, probably part of ATP-binding cassette (ABC) transport system MntABCD involved in manganese import. Binds manganese and delivers it to the membrane permease for translocation into the cytoplasm. The protein is Manganese-binding lipoprotein MntA of Bacillus subtilis (strain 168).